A 276-amino-acid chain; its full sequence is Large ribosomal subunit protein uL2 (276 aa).

A disordered region spans residues 221 to 276 (RGSAMNPNDHPHGGGEGRAPIGRKSPMTPWGKKARGIKTRDRKKSSNELIIRRRTK). A compositionally biased stretch (basic residues) spans 252–263 (KKARGIKTRDRK).

It belongs to the universal ribosomal protein uL2 family. As to quaternary structure, part of the 50S ribosomal subunit. Forms a bridge to the 30S subunit in the 70S ribosome.

Its function is as follows. One of the primary rRNA binding proteins. Required for association of the 30S and 50S subunits to form the 70S ribosome, for tRNA binding and peptide bond formation. It has been suggested to have peptidyltransferase activity; this is somewhat controversial. Makes several contacts with the 16S rRNA in the 70S ribosome. This Phytoplasma australiense protein is Large ribosomal subunit protein uL2.